A 993-amino-acid polypeptide reads, in one-letter code: Protein translocase subunit SecA (993 aa).

Residues glutamine 102, 120–124, and aspartate 523 each bind ATP; that span reads GEGKT. Positions 910–962 are disordered; sequence ENAPEPQISGGNGQQPPQRRQQTSLDDLEKQFERKKKRELEQARMAGGGMPDA. A compositionally biased stretch (basic and acidic residues) spans 936-951; the sequence is DLEKQFERKKKRELEQ. Zn(2+) is bound by residues cysteine 979, cysteine 981, cysteine 990, and histidine 991.

It belongs to the SecA family. As to quaternary structure, monomer and homodimer. Part of the essential Sec protein translocation apparatus which comprises SecA, SecYEG and auxiliary proteins SecDF. Other proteins may also be involved. It depends on Zn(2+) as a cofactor.

Its subcellular location is the cell inner membrane. It is found in the cytoplasm. It carries out the reaction ATP + H2O + cellular proteinSide 1 = ADP + phosphate + cellular proteinSide 2.. Functionally, part of the Sec protein translocase complex. Interacts with the SecYEG preprotein conducting channel. Has a central role in coupling the hydrolysis of ATP to the transfer of proteins into and across the cell membrane, serving as an ATP-driven molecular motor driving the stepwise translocation of polypeptide chains across the membrane. This is Protein translocase subunit SecA from Koribacter versatilis (strain Ellin345).